A 64-amino-acid chain; its full sequence is DTCGSGYNVDQRRTNSGCKAGNGDRHFCGCDRTGVVECKGGKWTEVQDCGSSSCKGTSNGGATC.

Intrachain disulfides connect cysteine 3–cysteine 30, cysteine 18–cysteine 38, cysteine 28–cysteine 54, and cysteine 49–cysteine 64.

Its subcellular location is the secreted. Functionally, may act as a toxin. May recognize a molecule or part of a molecule with a negatively charged surface potential. This is Bubble protein from Penicillium brevicompactum.